A 352-amino-acid chain; its full sequence is Molybdenum import ATP-binding protein ModC (352 aa).

The region spanning 1-229 is the ABC transporter domain; the sequence is MLELNFSQTL…SVMNPWLPKE (229 aa). An ATP-binding site is contributed by 31–38; the sequence is GVSGAGKT. A Mop domain is found at 289 to 352; it reads QTSIRNVLRA…AQIKSVSITA (64 aa).

The protein belongs to the ABC transporter superfamily. Molybdate importer (TC 3.A.1.8) family. As to quaternary structure, the complex is composed of two ATP-binding proteins (ModC), two transmembrane proteins (ModB) and a solute-binding protein (ModA).

Its subcellular location is the cell inner membrane. It carries out the reaction molybdate(out) + ATP + H2O = molybdate(in) + ADP + phosphate + H(+). In terms of biological role, part of the ABC transporter complex ModABC involved in molybdenum import. Responsible for energy coupling to the transport system. This chain is Molybdenum import ATP-binding protein ModC, found in Shigella dysenteriae serotype 1 (strain Sd197).